A 78-amino-acid chain; its full sequence is Small ribosomal subunit protein bS18 (78 aa).

The protein belongs to the bacterial ribosomal protein bS18 family. In terms of assembly, part of the 30S ribosomal subunit. Forms a tight heterodimer with protein bS6.

In terms of biological role, binds as a heterodimer with protein bS6 to the central domain of the 16S rRNA, where it helps stabilize the platform of the 30S subunit. The chain is Small ribosomal subunit protein bS18 from Lactobacillus delbrueckii subsp. bulgaricus (strain ATCC 11842 / DSM 20081 / BCRC 10696 / JCM 1002 / NBRC 13953 / NCIMB 11778 / NCTC 12712 / WDCM 00102 / Lb 14).